We begin with the raw amino-acid sequence, 234 residues long: uncharacterized protein (234 aa).

The next 4 membrane-spanning stretches (helical) occupy residues 28-48 (IVII…SIIS), 67-87 (FQIF…FDPI), 123-143 (GGVD…SGTI), and 154-174 (LYCI…GLLY).

Belongs to the complex I subunit 2 family.

It localises to the mitochondrion membrane. This is an uncharacterized protein from Neurospora crassa (strain ATCC 24698 / 74-OR23-1A / CBS 708.71 / DSM 1257 / FGSC 987).